A 172-amino-acid polypeptide reads, in one-letter code: Scytalone dehydratase (172 aa).

Positions 30, 50, and 53 each coordinate substrate. Catalysis depends on residues histidine 85 and histidine 110. Residue asparagine 131 participates in substrate binding.

Belongs to the scytalone dehydratase family. As to quaternary structure, homotrimer. Each subunit contains an active site, located in the central part of the hydrophobic core of the monomer, which functions independently.

Its subcellular location is the endosome. It catalyses the reaction scytalone = 1,3,8-trihydroxynaphthalene + H2O. It functions in the pathway pigment biosynthesis; melanin biosynthesis. With respect to regulation, (N-phenoxypropyl)-carboxamides such as carpropamid and derivatives of norephedrine act as inhibitors of scytalone dehydratase activity. Its function is as follows. Scytalone dehydratase; part of the gene cluster that mediates the biosynthesis of dihydroxynaphthalene melanin, a bluish-green pigment and a structural component of the conidial wall. Within the pathway, catalyzes the dehydration of scytalone as well as of vermelone. Is also able to dehydrate the alternate substrate 2,3-dihydro-2,5-dihydroxy-4H-benzopyran-4-one (DDBO) to 5-hydroxy-4H-1-benzopyran-4-one (HBO). The polypeptide is Scytalone dehydratase (SDH1) (Pyricularia oryzae (strain 70-15 / ATCC MYA-4617 / FGSC 8958) (Rice blast fungus)).